Consider the following 1073-residue polypeptide: MSDSEEDLGVQLKGLKIARHLKESGEHTDEESNSSPEHDCGLSNQDDLTVMHTQAKEEVFKRREEDGTRTEDALHEGEAGKEGTGFPSSQSVCSPNEADSGIDRADKPILLDPFKSVHDTDPVPGTKSRSNSDSDSDSDDGGWQEMPAVSSFNIYNHRGELELTSKVRNSEQASETSPTVPPGKNCKSVNDSRFDYTKMAAEQQAQRSYRTNKKTDFLFDHKVLKKKINSSQTSVNLTSSPSTTSLNNEKNNDDDDDDSYDEYEDDVEPVNDLNRDSQLNITKNLLSDMEKFAYVGAINILANQMCTNLATLCLCIDIKSHKKLAHRLQFTQKDMAAWKTVVLSRLYDHLGISQEEIVMIEKLSLHKIQLEDLCKCLKTTQSIDNPWENDRDHEEDGIEETTERMSPNEQNGSVQASTPDPEQSATPETPKAKQSPLSSDVPGKVLDPENVKSQDKLNIDVAWTIICDLFLICLQSSTYDSRSRTLLINFAKVLNMTSLEICEFERRVTDSLDMEQSTEDQVWDEQDHMRNRRRSKRRKKMAYVALAMVGGSLVLGLSGGLLAPVIGGGIAAGLSTIGITGATSFLTGVGGTTVVAVSSTAIGANIGARGMSKRMGSVRTFEFRPLHNNRRVNLILTVSGWMVGNEDDVRLPFSTVDPVEGDLYSLYWEPEMLKSIGQTVSIVATEIFTTSLQQILGATVLTALISSIQWPMALSKLGYILDNPWNVSLDRAWSAGKILADTLIARNLGARPITLVGFSIGARVIFSCLIELCKKKALGLIENVYLFGTPAVMKKEQLVMARSVVSGRFVNGYSDKDWFLAYLFRAAAGGFSAVMGISTIENVEGIENINCTEFVDGHLNYRKSMPKLLKRIGIAVLSEEFVEIEEMMNPEEVKRKRKLINDVDAAQKKLSERKKHNSWVPKWLKPKKSKWKVMVEEAVEEGRDMQDLPENDVNNNENENPDEHEGIARQKRRDAALVDHGALMHELQLIKQAMHEDEIKNKACLPGEDKEVESSNDFLGESHYKPPSTPKINPPQSPNNFQLLSAGRTILPEDDDFDPRGKKKVEFSFPDDI.

2 disordered regions span residues 1–151 and 163–190; these read MSDS…AVSS and LTSK…KSVN. Composition is skewed to basic and acidic residues over residues 54–81 and 101–121; these read QAKE…EAGK and GIDR…HDTD. The APM2-interacting WQEMP motif signature appears at 143–147; the sequence is WQEMP. 3 N-linked (GlcNAc...) asparagine glycosylation sites follow: asparagine 190, asparagine 229, and asparagine 236. The disordered stretch occupies residues 230 to 267; that stretch reads SSQTSVNLTSSPSTTSLNNEKNNDDDDDDSYDEYEDDV. The span at 233-249 shows a compositional bias: low complexity; that stretch reads TSVNLTSSPSTTSLNNE. A compositionally biased stretch (acidic residues) spans 252 to 267; it reads NDDDDDDSYDEYEDDV. Asparagine 280 carries N-linked (GlcNAc...) asparagine glycosylation. A helical membrane pass occupies residues 292–312; it reads FAYVGAINILANQMCTNLATL. Positions 385–448 are disordered; the sequence is NPWENDRDHE…SDVPGKVLDP (64 aa). Positions 404–427 are enriched in polar residues; it reads RMSPNEQNGSVQASTPDPEQSATP. A glycan (N-linked (GlcNAc...) asparagine) is linked at asparagine 411. Serine 435 bears the Phosphoserine mark. A helical membrane pass occupies residues 457-477; that stretch reads LNIDVAWTIICDLFLICLQSS. The N-linked (GlcNAc...) asparagine glycan is linked to asparagine 495. A run of 2 helical transmembrane segments spans residues 553–573 and 577–597; these read LVLG…IAAG and IGIT…VVAV. Residue asparagine 726 is glycosylated (N-linked (GlcNAc...) asparagine). The chain crosses the membrane as a helical span at residues 818-838; sequence WFLAYLFRAAAGGFSAVMGIS. An N-linked (GlcNAc...) asparagine glycan is attached at asparagine 850. 2 disordered regions span residues 942 to 968 and 1010 to 1073; these read GRDM…EGIA and KEVE…PDDI. The segment covering 1027 to 1037 has biased composition (pro residues); that stretch reads PSTPKINPPQS. Serine 1037 carries the post-translational modification Phosphoserine.

Belongs to the TMCO4 family. In terms of assembly, interacts with RPP0. Interacts with APM2.

Its subcellular location is the golgi apparatus membrane. It is found in the early endosome membrane. It localises to the cytoplasmic vesicle. The protein resides in the clathrin-coated vesicle membrane. In terms of biological role, probable lipase that recruits the AP-1-related (AP-1R) complex to membranes via interaction with APM2. The AP-1R complex is an adapter protein complex that mediates of cargo protein SNC1 sorting in clathrin-coated vesicles. The protein is Probable lipase MIL1 of Saccharomyces cerevisiae (strain ATCC 204508 / S288c) (Baker's yeast).